Consider the following 211-residue polypeptide: Thymidylate kinase (211 aa).

Residue 11–18 (GPDGAGKT) participates in ATP binding.

Belongs to the thymidylate kinase family.

The enzyme catalyses dTMP + ATP = dTDP + ADP. Phosphorylation of dTMP to form dTDP in both de novo and salvage pathways of dTTP synthesis. In Streptococcus uberis (strain ATCC BAA-854 / 0140J), this protein is Thymidylate kinase.